Consider the following 184-residue polypeptide: Ethylene-responsive transcription factor ERF122 (184 aa).

Residues 120-177 constitute a DNA-binding region (AP2/ERF); sequence KYKGVRKKPSGKWAAEIWDPRSKSRRWLGTFLTAEMAAQSYNDAAAEYRARRGKTNGE.

This sequence belongs to the AP2/ERF transcription factor family. ERF subfamily.

The protein resides in the nucleus. Probably acts as a transcriptional activator. Binds to the GCC-box pathogenesis-related promoter element. May be involved in the regulation of gene expression by stress factors and by components of stress signal transduction pathways. This Arabidopsis thaliana (Mouse-ear cress) protein is Ethylene-responsive transcription factor ERF122 (ERF122).